A 444-amino-acid chain; its full sequence is Transcription factor PIF5 (444 aa).

An involved in interaction with phyB region spans residues 26 to 39 (EDELVELLWRDGQV). Disordered stretches follow at residues 154–265 (HCGS…NLSE) and 416–444 (MLGF…GKIG). Over residues 155 to 171 (CGSNQSTNIHQATTLPV) the composition is skewed to polar residues. Residues 175–185 (DRSKNVEERLD) are compositionally biased toward basic and acidic residues. Residues 187–197 (SSGGSSGCSYG) show a composition bias toward low complexity. A compositionally biased stretch (polar residues) spans 224–244 (ESVSQSDIGLTSTDDQTMGNK). Basic and acidic residues predominate over residues 256–265 (RAAEVHNLSE). The 50-residue stretch at 256–305 (RAAEVHNLSERRRRDRINERMKALQELIPHCSRTDKASILDEAIDYLKSL) folds into the bHLH domain. Positions 424-437 (GPQSQLSAPATTDS) are enriched in polar residues. Position 437 is a phosphoserine (serine 437).

In terms of assembly, homodimer. Interacts specifically with the Pfr form of phytochrome B and with TOC1/APRR1. May form a heterodimer with PIF3. Interacts with PHYB, CRY1 and CRY2 in the nucleus in response to low blue light (LBL). Interacts with TOPP4. Associates to PTAC12/HMR/PAP5 which acts as a transcriptional coactivator. Phosphorylated. Additional phosphorylations induced within 60 seconds following phytochrome B photoactivation. In terms of processing, dephosphorylated by TOPP4 during photomorphogenesis, leading to subsequent degradation of PIF5 by the proteasomal pathway. As to expression, mainly expressed in leaves and seedlings, and, to a lower extent, in stems, fruits, flowers and roots.

Its subcellular location is the nucleus. Functionally, transcription factor acting negatively in the phytochrome B signaling pathway to promote the shade-avoidance response. Regulates PHYB abundance at the post-transcriptional level, possibly via the ubiquitin-proteasome pathway. Promotes ethylene activity in the dark. May regulate the expression of a subset of genes by binding to the G-box motif. Might be involved in the integration of light-signals to control both circadian and photomorphogenic processes. Activated by CRY1 and CRY2 in response to low blue light (LBL) by direct binding at chromatin on E-box variant 5'-CA[CT]GTG-3' to stimulate specific gene expression to adapt global physiology (e.g. hypocotyl elongation in low blue light). The sequence is that of Transcription factor PIF5 from Arabidopsis thaliana (Mouse-ear cress).